Here is a 325-residue protein sequence, read N- to C-terminus: NADH-quinone oxidoreductase subunit H (325 aa).

8 helical membrane passes run 11 to 31 (ILIS…CGAF), 81 to 101 (AIFT…FAIV), 114 to 134 (IGIL…LFAG), 154 to 174 (LSYE…VGSF), 186 to 206 (VWNV…GVAV), 237 to 257 (FFVG…TLFF), 265 to 285 (LPPF…FILI), and 304 to 324 (VCLP…LYNA).

Belongs to the complex I subunit 1 family. NDH-1 is composed of 13 different subunits. Subunits NuoA, H, J, K, L, M, N constitute the membrane sector of the complex.

It localises to the cell inner membrane. It catalyses the reaction a quinone + NADH + 5 H(+)(in) = a quinol + NAD(+) + 4 H(+)(out). In terms of biological role, NDH-1 shuttles electrons from NADH, via FMN and iron-sulfur (Fe-S) centers, to quinones in the respiratory chain. The immediate electron acceptor for the enzyme in this species is believed to be ubiquinone. Couples the redox reaction to proton translocation (for every two electrons transferred, four hydrogen ions are translocated across the cytoplasmic membrane), and thus conserves the redox energy in a proton gradient. This subunit may bind ubiquinone. The protein is NADH-quinone oxidoreductase subunit H of Yersinia pseudotuberculosis serotype O:3 (strain YPIII).